Consider the following 56-residue polypeptide: Large ribosomal subunit protein bL33 (56 aa).

Belongs to the bacterial ribosomal protein bL33 family.

The chain is Large ribosomal subunit protein bL33 from Actinobacillus succinogenes (strain ATCC 55618 / DSM 22257 / CCUG 43843 / 130Z).